Reading from the N-terminus, the 405-residue chain is Pulcherriminic acid synthase (405 aa).

Positions 62, 229, 285, and 353 each coordinate heme.

Belongs to the cytochrome P450 family. As to quaternary structure, homodimer. Heme is required as a cofactor.

The catalysed reaction is cyclo(L-leucyl-L-leucyl) + 6 reduced [2Fe-2S]-[ferredoxin] + 3 O2 + 4 H(+) = pulcherriminic acid + 6 oxidized [2Fe-2S]-[ferredoxin] + 4 H2O. Its function is as follows. Involved in the biosynthesis of pulcherrimin, a red extracellular pigment. Catalyzes the oxidation of cyclo(L-Leu-L-Leu) (cLL) to yield pulcherriminic acid which forms pulcherrimin via a nonenzymic reaction with Fe(3+). Substrates with small alkyl groups (cAA, cLG, cLP) exhibit weaker binding to CYP134A1, but substrates with larger hydrophobic side chains bind in a similar regime to cLL. This chain is Pulcherriminic acid synthase (cypX), found in Bacillus subtilis (strain 168).